A 483-amino-acid chain; its full sequence is Glycogen synthase kinase-3 alpha (483 aa).

Over residues 1–15 the composition is skewed to gly residues; the sequence is MSGGGPSGGGPGGSG. The tract at residues 1-96 is disordered; that stretch reads MSGGGPSGGG…PPPGVKLGRD (96 aa). Ser2 is modified (N-acetylserine). The residue at position 2 (Ser2) is a Phosphoserine. At Ser21 the chain carries Phosphoserine; by PKB/AKT1. The span at 25–82 shows a compositional bias: gly residues; sequence PGGGGGGGGGGPGGSASGPGGTGGGKASVGAMGGGVGASSSGGGPGGSGGGGSGGPGA. A phosphoserine mark is found at Ser72, Ser77, and Ser97. One can recognise a Protein kinase domain in the interval 119-403; that stretch reads YTDIKVIGNG…PLEACAHSFF (285 aa). ATP is bound by residues 125-133 and Lys148; that span reads IGNGSFGVV. The Proton acceptor role is filled by Asp244. Tyr279 bears the Phosphotyrosine mark. The disordered stretch occupies residues 449–483; sequence AGTTTLTPSSQALTETPTSSDWQSTDATPTLTNSS.

It belongs to the protein kinase superfamily. CMGC Ser/Thr protein kinase family. GSK-3 subfamily. In terms of assembly, monomer. Interacts with ARRB2. Interacts with AXIN1 and CTNNB1/beta-catenin. Interacts with CTNND2. Interacts with LMBR1L. Interacts with DDX3X. Interacts with TNFRSF10B. Interacts with RICTOR; the interaction results in phosphorylation of RICTOR at 'Thr-1695' by GSK3A which facilitates FBXW7-mediated ubiquitination and subsequent degradation of RICTOR. (Microbial infection) Interacts with M.tuberculosis PtpA. In terms of processing, phosphorylated by AKT1 at Ser-21: upon insulin-mediated signaling, the activated PKB/AKT1 protein kinase phosphorylates and deactivates GSK3A, resulting in the dephosphorylation and activation of GYS1. Activated by phosphorylation at Tyr-279. Post-translationally, (Microbial infection) Dephosphorylated at Tyr-279 by M.tuberculosis PtpA, which leads to prevention of apoptosis during early stages of microbial infection.

It catalyses the reaction L-seryl-[tau protein] + ATP = O-phospho-L-seryl-[tau protein] + ADP + H(+). It carries out the reaction L-threonyl-[tau protein] + ATP = O-phospho-L-threonyl-[tau protein] + ADP + H(+). The enzyme catalyses L-seryl-[protein] + ATP = O-phospho-L-seryl-[protein] + ADP + H(+). The catalysed reaction is L-threonyl-[protein] + ATP = O-phospho-L-threonyl-[protein] + ADP + H(+). Activated by phosphorylation at Tyr-279. In response to insulin, inhibited by phosphorylation at Ser-21 by PKB/AKT1; phosphorylation at this site causes a conformational change, preventing access of substrates to the active site. Inhibited by lithium. Constitutively active protein kinase that acts as a negative regulator in the hormonal control of glucose homeostasis, Wnt signaling and regulation of transcription factors and microtubules, by phosphorylating and inactivating glycogen synthase (GYS1 or GYS2), CTNNB1/beta-catenin, APC and AXIN1. Requires primed phosphorylation of the majority of its substrates. Contributes to insulin regulation of glycogen synthesis by phosphorylating and inhibiting GYS1 activity and hence glycogen synthesis. Regulates glycogen metabolism in liver, but not in muscle. May also mediate the development of insulin resistance by regulating activation of transcription factors. In Wnt signaling, regulates the level and transcriptional activity of nuclear CTNNB1/beta-catenin. Facilitates amyloid precursor protein (APP) processing and the generation of APP-derived amyloid plaques found in Alzheimer disease. May be involved in the regulation of replication in pancreatic beta-cells. Is necessary for the establishment of neuronal polarity and axon outgrowth. Through phosphorylation of the anti-apoptotic protein MCL1, may control cell apoptosis in response to growth factors deprivation. Acts as a regulator of autophagy by mediating phosphorylation of KAT5/TIP60 under starvation conditions which activates KAT5/TIP60 acetyltransferase activity and promotes acetylation of key autophagy regulators, such as ULK1 and RUBCNL/Pacer. Negatively regulates extrinsic apoptotic signaling pathway via death domain receptors. Promotes the formation of an anti-apoptotic complex, made of DDX3X, BRIC2 and GSK3B, at death receptors, including TNFRSF10B. The anti-apoptotic function is most effective with weak apoptotic signals and can be overcome by stronger stimulation. Phosphorylates mTORC2 complex component RICTOR at 'Thr-1695' which facilitates FBXW7-mediated ubiquitination and subsequent degradation of RICTOR. The protein is Glycogen synthase kinase-3 alpha (GSK3A) of Homo sapiens (Human).